The following is a 123-amino-acid chain: 1,4-dihydroxy-2-naphthoyl-CoA hydrolase (123 aa).

The active-site Nucleophile or proton acceptor is E46.

Belongs to the thioesterase PaaI family.

The enzyme catalyses 1,4-dihydroxy-2-naphthoyl-CoA + H2O = 1,4-dihydroxy-2-naphthoate + CoA + H(+). The protein operates within quinol/quinone metabolism; menaquinone biosynthesis. Catalyzes the hydrolysis of 1,4-dihydroxy-2-naphthoyl-CoA (DHNA-CoA) to 1,4-dihydroxy-2-naphthoate (DHNA) and free coenzyme A. Production of DHNA is required for protection against bacteriolysis in the cytosol of macrophages and tissue-specific virulence in vivo, suggesting that MenI is required to protect the bacteria from killing in the macrophage cytosol. This Listeria monocytogenes serotype 1/2a (strain 10403S) protein is 1,4-dihydroxy-2-naphthoyl-CoA hydrolase.